Here is a 198-residue protein sequence, read N- to C-terminus: MAEKQTAKRNRREEILQSLALMLESSDGSQRITTAKLAASVGVSEAALYRHFPSKTRMFDSLIEFIEDSLITRINLILKDEKNTSTRLRLIVLLILGFGERNPGLTRILTGHALMFEQDRLQGRINQLFERIEAQLRQVLREKRMREGEGYTTDENLLASQLLAFCEGMLSRFVRSEFKYRPTDDFDARWPLIAAQLQ.

Positions 10-70 constitute an HTH tetR-type domain; the sequence is NRREEILQSL…SLIEFIEDSL (61 aa). Residues 33–52 constitute a DNA-binding region (H-T-H motif); the sequence is TTAKLAASVGVSEAALYRHF. Residues 117–144 are a coiled coil; sequence EQDRLQGRINQLFERIEAQLRQVLREKR.

Belongs to the nucleoid occlusion factor SlmA family. Homodimer. Interacts with FtsZ.

It localises to the cytoplasm. The protein localises to the nucleoid. Required for nucleoid occlusion (NO) phenomenon, which prevents Z-ring formation and cell division over the nucleoid. Acts as a DNA-associated cell division inhibitor that binds simultaneously chromosomal DNA and FtsZ, and disrupts the assembly of FtsZ polymers. SlmA-DNA-binding sequences (SBS) are dispersed on non-Ter regions of the chromosome, preventing FtsZ polymerization at these regions. The chain is Nucleoid occlusion factor SlmA from Salmonella agona (strain SL483).